The chain runs to 435 residues: MTTTTTKKPHVLVIPFPQSGHMVPHLDLTHQILLRGATVTVLVTPKNSSYLDALRSLHSPEHFKTLILPFPSHPCIPSGVESLQQLPLEAIVHMFDALSRLHDPLVDFLSRQPPSDLPDAILGSSFLSPWINKVADAFSIKSISFLPINAHSISVMWAQEDRSFFNDLETATTESYGLVINSFYDLEPEFVETVKTRFLNHHRIWTVGPLLPFKAGVDRGGQSSIPPAKVSAWLDSCPEDNSVVYVGFGSQIRLTAEQTAALAAALEKSSVRFIWAVRDAAKKVNSSDNSVEEDVIPAGFEERVKEKGLVIRGWAPQTMILEHRAVGSYLTHLGWGSVLEGMVGGVMLLAWPMQADHFFNTTLIVDKLRAAVRVGENRDSVPDSDKLARILAESAREDLPERVTLMKLREKAMEAIKEGGSSYKNLDELVAEMCL.

Glutamine 18 lines the UDP pocket. Residue glutamine 18 participates in UDP-beta-L-rhamnose binding. The active-site Proton acceptor is histidine 21. Residue histidine 21 coordinates quercetin. Aspartate 119 acts as the Charge relay in catalysis. The UDP site is built by serine 250, alanine 315, histidine 332, glycine 336, serine 337, and glutamate 340. The UDP-beta-L-rhamnose site is built by serine 250, alanine 315, histidine 332, glycine 336, serine 337, and glutamate 340.

The protein belongs to the UDP-glycosyltransferase family. As to expression, highly expressed in floral buds. Expressed in stems, leaves and flowers. Expressed at low levels in roots and siliques. Expressed on the adaxial side of cotyledons and emerging leaves, in trichomes, root columella cells, and the late elongation/early differentiation zone of roots.

The catalysed reaction is quercitrin + UDP-beta-L-rhamnose = quercetin 3,7-bis-O-alpha-L-rhamnoside + UDP + H(+). The enzyme catalyses quercetin 3-O-beta-D-glucoside + UDP-beta-L-rhamnose = quercetin 3-O-beta-D-glucoside-7-O-alpha-L-rhamnoside + UDP + H(+). Its pathway is flavonoid metabolism. Its function is as follows. Flavonol 7-O-rhamnosyltransferase that catalyzes the transfer of rhamnose from UDP-rhamnose to the 7-OH position of 3-O-glycosylated flavonols, such as kaempferol 3-O-rhamnoside, kaempferol 3-O-glucoside, quercetin 3-O-glucoside, quercetin 3-O-galactoside, quercetin 3-O-rhamnoside and isorhamnetin 3-O-glucoside. Is able to glycosylate the flavonols quercetin and kaempferol to yield quercetin 7-O-rhamnoside and kaempferol 7-O-rhamnoside. Shows a strict specificity for UDP-rhamnose as sugar donor. Does not act on 3-O-glycosylated anthocyanins. The accumulation of kaempferol 3-O-rhamnoside-7-O-rhamnoside inhibits basipetal auxin transport, which influences auxin distribution and plant organ development. This Arabidopsis thaliana (Mouse-ear cress) protein is Flavonol 7-O-rhamnosyltransferase.